A 312-amino-acid polypeptide reads, in one-letter code: MEAENLTELSKFLLLGLSDDPELQPVLFGLFLSMYLVTVLGNLLIILAVSSDSHLHTPMYFFLSNLSFVDICFISTTVPKMLVSIQARSKDISYMGCLTQVYFLMMFAGMDTFLLAVMAYDRFVAICHPLHYTVIMNPCLCGLLVLASWFIIFWFSLVHILLMKRLTFSTGTEIPHFFCEPAQVLKVACSNTLLNNIVLYVATALLGVFPVAGILFSYSQIVSSLMGMSSTKGKYKAFSTCGSHLCVVSLFYGTGLGVYLSSAVTHSSQSSSTASVMYAMVTPMLNPFIYSLRNKDVKGALERLLSRADSCP.

Residues 1 to 25 (MEAENLTELSKFLLLGLSDDPELQP) are Extracellular-facing. N-linked (GlcNAc...) asparagine glycosylation occurs at Asn-5. A helical membrane pass occupies residues 26 to 46 (VLFGLFLSMYLVTVLGNLLII). Over 47-54 (LAVSSDSH) the chain is Cytoplasmic. The helical transmembrane segment at 55 to 75 (LHTPMYFFLSNLSFVDICFIS) threads the bilayer. The Extracellular portion of the chain corresponds to 76–99 (TTVPKMLVSIQARSKDISYMGCLT). The cysteines at positions 97 and 189 are disulfide-linked. A helical membrane pass occupies residues 100-120 (QVYFLMMFAGMDTFLLAVMAY). Residues 121 to 139 (DRFVAICHPLHYTVIMNPC) lie on the Cytoplasmic side of the membrane. A helical membrane pass occupies residues 140 to 160 (LCGLLVLASWFIIFWFSLVHI). Over 161-197 (LLMKRLTFSTGTEIPHFFCEPAQVLKVACSNTLLNNI) the chain is Extracellular. Residues 198 to 217 (VLYVATALLGVFPVAGILFS) traverse the membrane as a helical segment. The Cytoplasmic segment spans residues 218–237 (YSQIVSSLMGMSSTKGKYKA). The helical transmembrane segment at 238-258 (FSTCGSHLCVVSLFYGTGLGV) threads the bilayer. Topologically, residues 259-271 (YLSSAVTHSSQSS) are extracellular. A helical membrane pass occupies residues 272–292 (STASVMYAMVTPMLNPFIYSL). The Cytoplasmic segment spans residues 293–312 (RNKDVKGALERLLSRADSCP).

This sequence belongs to the G-protein coupled receptor 1 family. In terms of tissue distribution, nasal olfactory epithelium.

The protein localises to the cell membrane. Odorant receptor. Selectively activated by androstenone and the related odorous steroid androstadienone. The protein is Olfactory receptor 7D4 (OR7D4) of Homo sapiens (Human).